A 553-amino-acid chain; its full sequence is Non-SCF-type F-box protein ROY1 (553 aa).

Residues 3 to 49 (FQDQDIFIVFSHASLFLNQNDLLSLSLTSKKMHDMIAIPRLYSNIHI) enclose the F-box domain.

As to quaternary structure, interacts with SKP1 and YPT32; SKP1 is required for the interaction with YPT32.

The protein localises to the cytoplasm. The protein resides in the nucleus. It localises to the cytoplasmic vesicle membrane. Functionally, non-SCF-type F-box protein involved in the endocytic with the vacuolar sorting pathway. Acts as a repressor of YPT52 by inhibiting the formation of active, GTP-bound, YPT52. Involved in the defense mechanism against methylmercury toxicity. The polypeptide is Non-SCF-type F-box protein ROY1 (ROY1) (Saccharomyces cerevisiae (strain ATCC 204508 / S288c) (Baker's yeast)).